Here is a 299-residue protein sequence, read N- to C-terminus: Probable lipid kinase YegS (299 aa).

Residues 2 to 133 enclose the DAGKc domain; that stretch reads AEFPASLLIL…IDMAQVNKQT (132 aa). Residues threonine 40, 66–72, and threonine 95 contribute to the ATP site; that span reads GDGTINE. 3 residues coordinate Mg(2+): leucine 215, aspartate 218, and leucine 220. Glutamate 271 (proton acceptor) is an active-site residue.

It belongs to the diacylglycerol/lipid kinase family. YegS lipid kinase subfamily. It depends on Mg(2+) as a cofactor. Requires Ca(2+) as cofactor.

It is found in the cytoplasm. Probably phosphorylates lipids; the in vivo substrate is unknown. This is Probable lipid kinase YegS from Escherichia coli O9:H4 (strain HS).